Consider the following 299-residue polypeptide: ATP phosphoribosyltransferase (299 aa).

It belongs to the ATP phosphoribosyltransferase family. Long subfamily. Equilibrium between an active dimeric form, an inactive hexameric form and higher aggregates. Interconversion between the various forms is largely reversible and is influenced by the natural substrates and inhibitors of the enzyme. Requires Mg(2+) as cofactor.

The protein localises to the cytoplasm. It carries out the reaction 1-(5-phospho-beta-D-ribosyl)-ATP + diphosphate = 5-phospho-alpha-D-ribose 1-diphosphate + ATP. It participates in amino-acid biosynthesis; L-histidine biosynthesis; L-histidine from 5-phospho-alpha-D-ribose 1-diphosphate: step 1/9. Its activity is regulated as follows. Feedback inhibited by histidine. Functionally, catalyzes the condensation of ATP and 5-phosphoribose 1-diphosphate to form N'-(5'-phosphoribosyl)-ATP (PR-ATP). Has a crucial role in the pathway because the rate of histidine biosynthesis seems to be controlled primarily by regulation of HisG enzymatic activity. This is ATP phosphoribosyltransferase from Shigella dysenteriae serotype 1 (strain Sd197).